Here is a 496-residue protein sequence, read N- to C-terminus: Tripartite motif-containing protein 30A (496 aa).

The RING-type zinc finger occupies 15 to 59 (CPICLELLKEPVSADCNHSFCRACITLNYESNRNTDGKGNCPVCR). The B box-type zinc-finger motif lies at 91 to 132 (QKVNICAQHGEKLRLFCRKDMMVICWLCERSQEHRGHQTALI). 4 residues coordinate Zn(2+): Cys96, His99, Cys118, and His124. The stretch at 173–239 (NQIQINVENV…RDLISDVEHH (67 aa)) forms a coiled coil. Positions 205–210 (KKEKKE) are highly hydrophilic. The Nuclear localization signal signature appears at 268-276 (TVPQKRKRT). A B30.2/SPRY domain is found at 281-496 (DLKGMLQVYQ…EPMTICGPPS (216 aa)).

As to quaternary structure, homomultimer. Interacts with NR2C2/TAK1, TAB2 and TAB3. Does not interact with NLRP3, NLRC4 or TAB1. Highly expressed in spleen and lymph nodes (at protein level).

The protein resides in the cytoplasm. It is found in the nucleus. Trans-acting factor that regulates gene expression of interleukin 2 receptor alpha chain. May affect IL2R-alpha expression through cis-acting negative regulatory elements or through competition with proteins that bind to enhancer or activator sequences. Negatively regulates Toll-like receptor (TLR)-mediated activation of NFKB by promoting degradation of TAB2 and TAB3 and preventing TRAF6 autoubiquitination. Negatively regulates production of reactive oxygen species (ROS) which inhibits activation of the NLRP3 inflammasome complex. This, in turn, regulates activation of CASP1 and subsequent cleavage of IL1B and IL18. No activity detected against a range of retroviruses including a number of lentiviruses, gammaretroviruses and betaretroviruses. This chain is Tripartite motif-containing protein 30A (Trim30a), found in Mus musculus (Mouse).